A 1025-amino-acid chain; its full sequence is Multidrug resistance protein MdtC (1025 aa).

12 consecutive transmembrane segments (helical) span residues 3 to 23 (FFALFIYRPVATILLSVAITL), 333 to 353 (EVEQTLIISVALVILVVFLFL), 360 to 380 (IIPAVAVPVSLIGTFAAMYLC), 387 to 407 (LSLMALTIATGFVVDDAIVVL), 431 to 451 (VGFTVLSMSLSLVAVFLPLLL), 463 to 483 (FAVTLSVAIGISLLVSLTLTP), 528 to 548 (LVGVVLLGTIALNIWLYISIP), 853 to 873 (VILIIAAIATVYIVLGILYES), 875 to 895 (VHPLTILSTLPSAGVGALLAL), 897 to 917 (LFNAPFSLIALIGIMLLIGIV), 953 to 973 (PIMMTTLAALFGALPLVLSGG), and 984 to 1004 (ITIVGGLVMSQLLTLYTTPVV).

This sequence belongs to the resistance-nodulation-cell division (RND) (TC 2.A.6) family. MdtC subfamily. In terms of assembly, part of a tripartite efflux system composed of MdtA, MdtB and MdtC. MdtC forms a heteromultimer with MdtB.

The protein localises to the cell inner membrane. The MdtABC tripartite complex confers resistance against novobiocin and deoxycholate. The polypeptide is Multidrug resistance protein MdtC (Escherichia coli O7:K1 (strain IAI39 / ExPEC)).